The following is a 163-amino-acid chain: Nucleotide-binding protein Cj0374 (163 aa).

The protein belongs to the YajQ family.

Functionally, nucleotide-binding protein. The sequence is that of Nucleotide-binding protein Cj0374 from Campylobacter jejuni subsp. jejuni serotype O:2 (strain ATCC 700819 / NCTC 11168).